Consider the following 88-residue polypeptide: Protein WIR1A (88 aa).

Over 1–13 (MASLGSSAGGRRP) the chain is Cytoplasmic. Residues 14 to 35 (TVLLQIALFVVVAAIIINSSVC) form a helical membrane-spanning segment. The Extracellular portion of the chain corresponds to 36-88 (LGATAVHDAAASGTGALDPNVPAVPTPGGAGQPYTGRGCRTVYGCRPPAGGQP).

It is found in the membrane. In terms of biological role, associated with pathogen defense. This chain is Protein WIR1A (WIR1A), found in Triticum aestivum (Wheat).